The sequence spans 69 residues: UPF0437 protein AZC_3451 (69 aa).

It belongs to the UPF0437 family.

In Azorhizobium caulinodans (strain ATCC 43989 / DSM 5975 / JCM 20966 / LMG 6465 / NBRC 14845 / NCIMB 13405 / ORS 571), this protein is UPF0437 protein AZC_3451.